A 93-amino-acid chain; its full sequence is CRISPR-associated endoribonuclease Cas2 2 (93 aa).

Asp9 serves as a coordination point for Mg(2+).

The protein belongs to the CRISPR-associated endoribonuclease Cas2 protein family. As to quaternary structure, homodimer, forms a heterotetramer with a Cas1 homodimer. It depends on Mg(2+) as a cofactor.

Functionally, CRISPR (clustered regularly interspaced short palindromic repeat), is an adaptive immune system that provides protection against mobile genetic elements (viruses, transposable elements and conjugative plasmids). CRISPR clusters contain sequences complementary to antecedent mobile elements and target invading nucleic acids. CRISPR clusters are transcribed and processed into CRISPR RNA (crRNA). Functions as a ssRNA-specific endoribonuclease. Involved in the integration of spacer DNA into the CRISPR cassette. This is CRISPR-associated endoribonuclease Cas2 2 from Synechocystis sp. (strain ATCC 27184 / PCC 6803 / Kazusa).